Here is a 1929-residue protein sequence, read N- to C-terminus: Myoferlin (1929 aa).

Positions 1-53 (MISYEPPPSAISNPTDPGGTTIIQGDGENDEEEDRDIVDAGFNPSVPGAPGQT) are disordered. Over residues 27 to 36 (GENDEEEDRD) the composition is skewed to acidic residues. 2 C2 domains span residues 62–179 (VKGK…RKWV) and 218–354 (EDDD…EEYD). Residues Asp-267, Asp-275, Asp-323, Asp-325, and Asp-331 each contribute to the Ca(2+) site. Over residues 898 to 907 (RRLVRKRKKD) the composition is skewed to basic residues. Residues 898–918 (RRLVRKRKKDPKVSTTSKAAL) form a disordered region. 4 consecutive C2 domains span residues 996–1124 (GANT…LLWY), 1159–1283 (RAPQ…TKHE), 1408–1527 (IPYP…SHCG), and 1645–1793 (GPPG…EKCS). The Ca(2+) site is built by Asp-1028, Asp-1034, Asp-1090, and Asp-1092. Residues Asp-1442, Asp-1448, Asp-1497, Asp-1499, Asp-1764, Ser-1767, and Asp-1770 each coordinate Ca(2+). Residues 1845–1858 (DAEERPAGKGRDEP) are compositionally biased toward basic and acidic residues. Residues 1845–1867 (DAEERPAGKGRDEPNMNPKLDPP) are disordered. A helical transmembrane segment spans residues 1894–1914 (WVFIGLIILLLVLLFLGVFFY).

The protein belongs to the ferlin family. It depends on Ca(2+) as a cofactor.

It localises to the cell membrane. The protein localises to the nucleus membrane. It is found in the cytoplasmic vesicle membrane. May play a role in membrane regeneration and repair. This Xenopus tropicalis (Western clawed frog) protein is Myoferlin (myof).